Here is a 503-residue protein sequence, read N- to C-terminus: MEKIPRWLLFSLISSVLCILGALCVPLLSVAFDSKRNSQSKLVNYGLSLSAGSMITTSLYMLLPRIEKSNRFKVFPGLLLGICLSFFLNYLVHAFASESLVHCADSGDHATGSHIHSKSHSHSHSHSHADSHSNFSNDHDLENAPSEHGYATSSSSVSENDPLITKDSDRPQMKKKMSLIDLLTRRKSEGECCDLNKCTPLLQSEQPEYIACVPPVIKSSQSERNVPHGCEGSEDNGQSDDKDHRGLVCVENNIGYDLENLSLYRKNFLSSRHHHSSESPENYGSNQLSHSFSSPLGNDVTENPAALADTQYHPENGSLYPHHHHLETPFSKLLSIGMQTCLVLALHKFPEGFIIFYTNRSDSSKSLGFSIFLSLTIHNFVEGFAMTLPFYTVFESKWVAILITAVLGGGSQPLGALIGYFIFKGSTPRDHEPNMDFLLSVTAGFLLVIGLQMFQTGIGFSDGHHHHQGEGDEEMKQSHSSGTTCLKWCCTGVLLILASALFT.

3 helical membrane-spanning segments follow: residues 8-28 (LLFS…VPLL), 42-62 (LVNY…LYML), and 75-95 (FPGL…VHAF). The interval 112-171 (GSHIHSKSHSHSHSHSHADSHSNFSNDHDLENAPSEHGYATSSSSVSENDPLITKDSDRP) is disordered. The span at 115–126 (IHSKSHSHSHSH) shows a compositional bias: basic residues. Over residues 127–142 (SHADSHSNFSNDHDLE) the composition is skewed to basic and acidic residues. A phosphoserine mark is found at Ser-178 and Ser-188. Disordered stretches follow at residues 221-244 (QSER…DKDH) and 274-295 (HHSS…FSSP). Residues 280 to 295 (PENYGSNQLSHSFSSP) are compositionally biased toward polar residues. 5 helical membrane passes run 336–356 (IGMQ…FIIF), 371–391 (IFLS…LPFY), 398–418 (WVAI…GALI), 438–458 (LLSV…QTGI), and 482–502 (GTTC…SALF).

It belongs to the ZIP transporter (TC 2.A.5) family.

The protein resides in the vacuole membrane. Transports zinc from storage in the vacuole to the cytoplasm. This Saccharomyces cerevisiae (strain ATCC 204508 / S288c) (Baker's yeast) protein is Zinc-regulated transporter 3 (ZRT3).